Reading from the N-terminus, the 62-residue chain is MATLQDVHLRVNDRVTPVYFTARSFLLVSPKRAGQATFLAREEGTDNPVVTCHVSDFYKDGV.

In terms of biological role, needed for optimal phage development. This Pseudomonas savastanoi pv. phaseolicola (Pseudomonas syringae pv. phaseolicola) protein is Protein P14 (P14).